The primary structure comprises 170 residues: Small ribosomal subunit protein uS13 (170 aa).

The span at 128–140 (VRHKRGQKVRGQR) shows a compositional bias: basic residues. A disordered region spans residues 128–170 (VRHKRGQKVRGQRTKSTGRTEGTIGVNVEAIKEEQAEDGGDEE).

The protein belongs to the universal ribosomal protein uS13 family. As to quaternary structure, part of the 30S ribosomal subunit. Forms a loose heterodimer with protein S19. Forms two bridges to the 50S subunit in the 70S ribosome.

Its function is as follows. Located at the top of the head of the 30S subunit, it contacts several helices of the 16S rRNA. In the 70S ribosome it contacts the 23S rRNA (bridge B1a) and protein L5 of the 50S subunit (bridge B1b), connecting the 2 subunits; these bridges are implicated in subunit movement. The protein is Small ribosomal subunit protein uS13 of Natronomonas pharaonis (strain ATCC 35678 / DSM 2160 / CIP 103997 / JCM 8858 / NBRC 14720 / NCIMB 2260 / Gabara) (Halobacterium pharaonis).